The chain runs to 100 residues: Large ribosomal subunit protein bL21 (100 aa).

The protein belongs to the bacterial ribosomal protein bL21 family. As to quaternary structure, part of the 50S ribosomal subunit. Contacts protein L20.

This protein binds to 23S rRNA in the presence of protein L20. In Corynebacterium jeikeium (strain K411), this protein is Large ribosomal subunit protein bL21.